A 396-amino-acid polypeptide reads, in one-letter code: NASP-related protein sim3 (396 aa).

The disordered stretch occupies residues Met1–Ala31. TPR repeat units follow at residues Ile32–Ile65 and Ile89–Thr122. Positions Asn135–Glu164 are disordered. Basic and acidic residues predominate over residues His143–Asn154. A TPR 3 repeat occupies Ala199–Val232. Residues Cys267–Ala329 are a coiled coil. Residues Arg284–Glu301 are compositionally biased toward basic and acidic residues. Disordered stretches follow at residues Arg284–Asp307 and Glu334–Asp396. The span at Ser343–Leu353 shows a compositional bias: low complexity.

This sequence belongs to the NASP family. In terms of assembly, interacts with cnp1, hht1, hht2 and hht3; has a preference for CENP-A (cnp1) over histone H3 (hht1/2/3).

It localises to the nucleus. Functionally, histone H3 and H3-like CENP-A-specific chaperone. Promotes delivery and incorporation of CENP-A in centromeric chromatin, probably by escorting nascent CENP-A to CENP-A chromatin assembly factors. Required for central core silencing and normal chromosome segregation. This chain is NASP-related protein sim3 (sim3), found in Schizosaccharomyces pombe (strain 972 / ATCC 24843) (Fission yeast).